Here is a 482-residue protein sequence, read N- to C-terminus: Replication factor C large subunit (482 aa).

Residue 46–53 (GPPGSGKT) coordinates ATP. A disordered region spans residues 420 to 482 (EKETPKKKKK…KKQATLDSFF (63 aa)). Residues 442 to 476 (KISEPPKEPLKEVIEETVEKTDKKEKEKKDPKKQA) show a composition bias toward basic and acidic residues.

Belongs to the activator 1 small subunits family. RfcL subfamily. As to quaternary structure, heteromultimer composed of small subunits (RfcS) and large subunits (RfcL).

Its function is as follows. Part of the RFC clamp loader complex which loads the PCNA sliding clamp onto DNA. The polypeptide is Replication factor C large subunit (Methanococcus maripaludis (strain C7 / ATCC BAA-1331)).